Consider the following 171-residue polypeptide: Large ribosomal subunit protein bL9 (171 aa).

It belongs to the bacterial ribosomal protein bL9 family.

Its function is as follows. Binds to the 23S rRNA. This chain is Large ribosomal subunit protein bL9, found in Rickettsia akari (strain Hartford).